We begin with the raw amino-acid sequence, 122 residues long: Glycine cleavage system H protein (122 aa).

The Lipoyl-binding domain occupies 19–101 (VVTVGITNYA…EKEGWLWKMT (83 aa)). Lys60 is modified (N6-lipoyllysine).

This sequence belongs to the GcvH family. In terms of assembly, the glycine cleavage system is composed of four proteins: P, T, L and H. The cofactor is (R)-lipoate.

Functionally, the glycine cleavage system catalyzes the degradation of glycine. The H protein shuttles the methylamine group of glycine from the P protein to the T protein. This chain is Glycine cleavage system H protein, found in Bartonella quintana (strain Toulouse) (Rochalimaea quintana).